The chain runs to 310 residues: Methionyl-tRNA formyltransferase (310 aa).

Residue 110–113 participates in (6S)-5,6,7,8-tetrahydrofolate binding; that stretch reads SVLP.

It belongs to the Fmt family.

It carries out the reaction L-methionyl-tRNA(fMet) + (6R)-10-formyltetrahydrofolate = N-formyl-L-methionyl-tRNA(fMet) + (6S)-5,6,7,8-tetrahydrofolate + H(+). Attaches a formyl group to the free amino group of methionyl-tRNA(fMet). The formyl group appears to play a dual role in the initiator identity of N-formylmethionyl-tRNA by promoting its recognition by IF2 and preventing the misappropriation of this tRNA by the elongation apparatus. This is Methionyl-tRNA formyltransferase from Mycolicibacterium vanbaalenii (strain DSM 7251 / JCM 13017 / BCRC 16820 / KCTC 9966 / NRRL B-24157 / PYR-1) (Mycobacterium vanbaalenii).